The primary structure comprises 221 residues: Adenylate kinase (221 aa).

10-15 (GAGKGT) is a binding site for ATP. The interval 30-59 (STGDMLRAAVKARTELGVAAKKIMDAGGLV) is NMP. Residues threonine 31, arginine 36, 57 to 59 (GLV), 85 to 88 (GFPR), and glutamine 92 each bind AMP. An LID region spans residues 122-159 (GRRVHLASGRTYHIKFNPPKVEGKDDITGDPLIQRDDD). ATP contacts are provided by residues arginine 123 and 132–133 (TY). 2 residues coordinate AMP: arginine 156 and arginine 167. ATP is bound at residue serine 207.

Belongs to the adenylate kinase family. As to quaternary structure, monomer.

It is found in the cytoplasm. The catalysed reaction is AMP + ATP = 2 ADP. Its pathway is purine metabolism; AMP biosynthesis via salvage pathway; AMP from ADP: step 1/1. Catalyzes the reversible transfer of the terminal phosphate group between ATP and AMP. Plays an important role in cellular energy homeostasis and in adenine nucleotide metabolism. The chain is Adenylate kinase from Polynucleobacter necessarius subsp. necessarius (strain STIR1).